Consider the following 85-residue polypeptide: NAD(P)H-quinone oxidoreductase subunit O (85 aa).

It belongs to the complex I NdhO subunit family. As to quaternary structure, NDH-1 can be composed of about 15 different subunits; different subcomplexes with different compositions have been identified which probably have different functions.

The protein resides in the cellular thylakoid membrane. The enzyme catalyses a plastoquinone + NADH + (n+1) H(+)(in) = a plastoquinol + NAD(+) + n H(+)(out). The catalysed reaction is a plastoquinone + NADPH + (n+1) H(+)(in) = a plastoquinol + NADP(+) + n H(+)(out). In terms of biological role, NDH-1 shuttles electrons from an unknown electron donor, via FMN and iron-sulfur (Fe-S) centers, to quinones in the respiratory and/or the photosynthetic chain. The immediate electron acceptor for the enzyme in this species is believed to be plastoquinone. Couples the redox reaction to proton translocation, and thus conserves the redox energy in a proton gradient. Cyanobacterial NDH-1 also plays a role in inorganic carbon-concentration. This chain is NAD(P)H-quinone oxidoreductase subunit O, found in Synechococcus sp. (strain WH7803).